The following is a 634-amino-acid chain: Chaperone protein HtpG (634 aa).

The segment at 1-344 is a; substrate-binding; sequence MNETVANNKE…SNDLPLNVSR (344 aa). The segment at 345 to 561 is b; sequence EILQDNKVTQ…DFEMGTQMAK (217 aa). Positions 562 to 634 are c; the sequence is LLAAAGQAVP…TAINSLLTKG (73 aa).

The protein belongs to the heat shock protein 90 family. Homodimer.

It is found in the cytoplasm. In terms of biological role, molecular chaperone. Has ATPase activity. The sequence is that of Chaperone protein HtpG from Vibrio vulnificus (strain CMCP6).